Here is a 31-residue protein sequence, read N- to C-terminus: Palustrin-2a (31 aa).

Residues C23 and C29 are joined by a disulfide bond.

Expressed by the skin glands.

Its subcellular location is the secreted. Antimicrobial activity against Gram-negative bacterium E.coli. This is Palustrin-2a from Lithobates palustris (Pickerel frog).